The primary structure comprises 1110 residues: MGNFKSVGQEPGPPCGLGLGLGLGLCGKQGPASPAPVSASEPTRAPSSPPLPLPAPEHSPPLTRPPEGPKFPRVKNWEVGSIAYDTLSAQAQQDGPCTPRRCLGSLVFPRKLQGRPSQSPLPQEQLLGQARDFINQYYSSIKRSGSQAHELRLQEVEAEVVATGTYQLRESELVFGAKQAWRNAPRCVGRIQWGKLQVFDARDCRSAQEMFTYICNHIKYATNRGNLRSAITVFPQRFPGRGDFRIWNSQLIRYAGYRQQDGSVRGDPANVEITELCVQHGWTPGNGRFDVLPLLLQAPDEPPELFTLPPELVLEVPLEHPTLEWFAALGLRWYALPAVSNMLLEIGGLEFPAVPFSGWYMSSEIGMRNFCDPHRYNILEDVAVCMDLDTRTTSSLWKDKAAVEINVAVLHSYQLAKVTIVDHHAATASFMKHLENEQKARGGCPADWAWIVPPISGSLTPVFHQEMVNYFLSPAFRYQPDPWKGSGTKGTGITRKKTFKEVANAVKISASLMGTVMAKRVKATILYGSETGRAQSYAQQLGRLFRKAFDPRVLCMDEYDVVSLEHETLVLVVTSTFGNGDPPENGESFAAALMEMSGPYNSSPRPEQHKSYKIRFNSVSCSDPLVTSWRRKRKESSNTDSAGALGTLRFCVFGLGSRAYPHFCAFARAVDTRLEELGGERLLQLGQGDELCGQEEAFRGWAQAAFQAACETFCVGEDAKAAAKDIFSPKCSWKRQRYRLSTQAQGLQLLPGLIHVHRRKMFQATILSVENLQSSKSTRATILVRLDTGGQEGLQYQPGDHIGICPPNRPGLVEALLSRVEDPPPPAESVAVEQLEKGSPGGPPPGWVRDPRLPPCTLRQALTFFLDITSPPSPRLLRLLSTLAEEPSEQQELETLSQDPRRYEEWKWFRCPTLLEVLEQFPSIALPAPLLLTQLPLLQPRYYSVSSAPSAHPGEIHLTVAVLAYRTQDGLGPLHYGVCSTWLSQLKTGDQVPCFIRGAPSFRLPPDPSLPCILVGPGTGIAPFRGFWQERLHDIESKGLQPAPMTLVFGCRCSQLDHLYRDEVQDAQQRGVFGRVLTAFSREPNSPKERHLRGAVPWAFDLPGPDTSSP.

Residues 1–74 form a disordered region; sequence MGNFKSVGQE…PPEGPKFPRV (74 aa). Positions 15–27 are enriched in gly residues; it reads CGLGLGLGLGLCG. The segment covering 31-40 has biased composition (low complexity); the sequence is PASPAPVSAS. Positions 47 to 69 are enriched in pro residues; that stretch reads SSPPLPLPAPEHSPPLTRPPEGP. Zn(2+) is bound by residues C97 and C102. The interaction with NOSIP stretch occupies residues 101–489; sequence RCLGSLVFPR…PDPWKGSGTK (389 aa). S105 is a (6R)-L-erythro-5,6,7,8-tetrahydrobiopterin binding site. Residue S117 is modified to Phosphoserine. C187 contributes to the heme b binding site. L-arginine contacts are provided by Q250, W359, Y360, and E364. A (6R)-L-erythro-5,6,7,8-tetrahydrobiopterin-binding site is contributed by R368. Residue N369 participates in L-arginine binding. Positions 449, 450, and 463 each coordinate (6R)-L-erythro-5,6,7,8-tetrahydrobiopterin. Position 478 (Y478) interacts with heme b. T498 carries the phosphothreonine modification. S529, E530, T531, R533, S575, and T576 together coordinate FMN. A phosphoserine mark is found at S618, S636, and S641. The FMN site is built by S657, C664, E690, and Q694. R779 provides a ligand contact to NADP(+). H801 serves as a coordination point for FAD. The disordered stretch occupies residues 821–848; that stretch reads EDPPPPAESVAVEQLEKGSPGGPPPGWV. S839 is modified (phosphoserine). FAD contacts are provided by R941, Y943, S944, T959, A961, Y965, V978, C979, and S980. Residues T1019, R1052, S1081, R1082, and K1088 each coordinate NADP(+).

The protein belongs to the NOS family. In terms of assembly, homodimer. Interacts with NOSIP and NOSTRIN. Interacts with HSP90AB1. Forms a complex with ASL, ASS1 and SLC7A1; the complex regulates cell-autonomous L-arginine synthesis and citrulline recycling while channeling extracellular L-arginine to nitric oxide synthesis pathway. Heme b is required as a cofactor. The cofactor is FAD. Requires FMN as cofactor. It depends on (6R)-L-erythro-5,6,7,8-tetrahydrobiopterin as a cofactor.

It localises to the membrane. Its subcellular location is the caveola. The protein resides in the cytoplasm. The protein localises to the cytoskeleton. It is found in the golgi apparatus. It localises to the cell membrane. It carries out the reaction 2 L-arginine + 3 NADPH + 4 O2 + H(+) = 2 L-citrulline + 2 nitric oxide + 3 NADP(+) + 4 H2O. With respect to regulation, stimulated by calcium/calmodulin. Inhibited by NOSIP and NOSTRIN. Produces nitric oxide (NO) which is implicated in vascular smooth muscle relaxation through a cGMP-mediated signal transduction pathway. NO mediates vascular endothelial growth factor (VEGF)-induced angiogenesis in coronary vessels and promotes blood clotting through the activation of platelets. This Cavia porcellus (Guinea pig) protein is Nitric oxide synthase 3 (NOS3).